A 612-amino-acid polypeptide reads, in one-letter code: UvrABC system protein C (612 aa).

One can recognise a GIY-YIG domain in the interval 13 to 92 (AKPGVYIMHD…IKEHRPKYNT (80 aa)). In terms of domain architecture, UVR spans 204-239 (KKIMDRLTTQMQEASEKMEYEEAARYRDLLMSVKQV).

It belongs to the UvrC family. As to quaternary structure, interacts with UvrB in an incision complex.

It localises to the cytoplasm. Functionally, the UvrABC repair system catalyzes the recognition and processing of DNA lesions. UvrC both incises the 5' and 3' sides of the lesion. The N-terminal half is responsible for the 3' incision and the C-terminal half is responsible for the 5' incision. The protein is UvrABC system protein C of Lachnospira eligens (strain ATCC 27750 / DSM 3376 / VPI C15-48 / C15-B4) (Eubacterium eligens).